The primary structure comprises 206 residues: Adenylate kinase (206 aa).

10–15 (GAGKGT) contacts ATP. The tract at residues 30–59 (STGDILREAVQKGTPLGKKAKEYMERGELV) is NMP. Residues T31, 57–59 (ELV), 82–85 (GFPR), and Q89 each bind AMP. ATP is bound by residues R120, R124, and 133–134 (VY). The segment at 123-153 (GRRINPETGEVYHVKYNPPPPGVKVIQREDD) is LID. Position 161 (R161) interacts with AMP. K189 is an ATP binding site.

The protein belongs to the adenylate kinase family. Monomer.

The protein resides in the cytoplasm. The catalysed reaction is AMP + ATP = 2 ADP. It functions in the pathway purine metabolism; AMP biosynthesis via salvage pathway; AMP from ADP: step 1/1. In terms of biological role, catalyzes the reversible transfer of the terminal phosphate group between ATP and AMP. Plays an important role in cellular energy homeostasis and in adenine nucleotide metabolism. This Aquifex aeolicus (strain VF5) protein is Adenylate kinase.